The chain runs to 153 residues: UPF0735 ACT domain-containing protein FN1487 (153 aa).

The ACT domain occupies 76-152; that stretch reads SLHLSLKDRV…GIADIRITGS (77 aa).

It belongs to the UPF0735 family.

This is UPF0735 ACT domain-containing protein FN1487 from Fusobacterium nucleatum subsp. nucleatum (strain ATCC 25586 / DSM 15643 / BCRC 10681 / CIP 101130 / JCM 8532 / KCTC 2640 / LMG 13131 / VPI 4355).